Here is a 191-residue protein sequence, read N- to C-terminus: MVKLVFLGPPGAGKGTQASLIADFYKVPHISTGDILRSNVAERSPLGIKAKDYMDKGDLVPDQLILDMVKERLENPNAQNGWILDGFPRTVTQAEEFFKKYESEGEEAKSSSSFHVINLQVPDDVLVARLLSRKREDDQEETIRNRLQVYYQQTQPLIEFYQAREQLIIIDGNNPIETVTNAIKQEVDKIT.

11 to 16 serves as a coordination point for ATP; it reads GAGKGT. The interval 31–60 is NMP; it reads STGDILRSNVAERSPLGIKAKDYMDKGDLV. AMP-binding positions include threonine 32, arginine 37, 58 to 60, 86 to 89, and glutamine 93; these read DLV and GFPR. An LID region spans residues 132–138; sequence SRKREDD. Residue arginine 133 participates in ATP binding. Residues arginine 135 and arginine 146 each coordinate AMP. Asparagine 174 lines the ATP pocket.

The protein belongs to the adenylate kinase family. In terms of assembly, monomer.

It localises to the cytoplasm. The catalysed reaction is AMP + ATP = 2 ADP. It functions in the pathway purine metabolism; AMP biosynthesis via salvage pathway; AMP from ADP: step 1/1. In terms of biological role, catalyzes the reversible transfer of the terminal phosphate group between ATP and AMP. Plays an important role in cellular energy homeostasis and in adenine nucleotide metabolism. The chain is Adenylate kinase from Trichodesmium erythraeum (strain IMS101).